A 1072-amino-acid chain; its full sequence is Dyslexia-associated protein KIAA0319 (1072 aa).

A signal peptide spans 1-20 (MAPPTGVLSSLLLLVTIAGC). Positions 21–99 (ARKQCSEGRT…PKKMGPIRSY (79 aa)) constitute an MANSC domain. At 21 to 955 (ARKQCSEGRT…WDGESNCEWS (935 aa)) the chain is on the extracellular side. Disordered regions lie at residues 168–277 (LQPS…SLPP) and 295–327 (VTPG…SPTT). N-linked (GlcNAc...) asparagine glycosylation is found at asparagine 196, asparagine 219, and asparagine 262. The segment covering 254 to 265 (SQLQEQSSNSSG) has biased composition (polar residues). The span at 311 to 320 (AAPSESTPSE) shows a compositional bias: low complexity. PKD domains lie at 341 to 427 (DNLI…VKPA), 435 to 524 (VAVV…VNNA), 530 to 620 (VANA…VQPE), 621 to 714 (NNRP…VKKE), and 720 to 811 (RARA…VQPD). Asparagine 394, asparagine 421, asparagine 498, asparagine 513, asparagine 536, and asparagine 551 each carry an N-linked (GlcNAc...) asparagine glycan. The N-linked (GlcNAc...) asparagine glycan is linked to asparagine 733. A helical transmembrane segment spans residues 956-976 (IFYVTVLAFTLIVLTGGFTWL). Topologically, residues 977–1072 (CICCCKRQKR…ASFSYCSKDR (96 aa)) are cytoplasmic. An Endocytosis signal motif is present at residues 995 to 998 (YTIL). The tract at residues 1045-1072 (KMERGNPKVSMNGSIRNGASFSYCSKDR) is disordered. The span at 1053-1072 (VSMNGSIRNGASFSYCSKDR) shows a compositional bias: polar residues.

As to quaternary structure, homodimer. Interacts with AP2M1; required for clathrin-mediated endocytosis. N-glycosylated. Post-translationally, O-glycosylated. In terms of processing, shedding of the extracellular domain and intramembrane cleavage produce several proteolytic products. The intramembrane cleavage releases a soluble cytoplasmic polypeptide that translocates to the nucleolus. Detected in adult brain cortex and fetal frontal lobe (at protein level). Highly expressed in brain cortex, putamen, amygdala, hippocampus and cerebellum.

It is found in the cell membrane. The protein localises to the early endosome membrane. Its function is as follows. Involved in neuronal migration during development of the cerebral neocortex. May function in a cell autonomous and a non-cell autonomous manner and play a role in appropriate adhesion between migrating neurons and radial glial fibers. May also regulate growth and differentiation of dendrites. In Homo sapiens (Human), this protein is Dyslexia-associated protein KIAA0319 (KIAA0319).